A 310-amino-acid chain; its full sequence is Syndecan-1 (310 aa).

The N-terminal stretch at 1–22 (MRRAALWLWLCALALSLQPALP) is a signal peptide. Over 23–254 (QIVATNLPPE…GLLDRKEVLG (232 aa)) the chain is Extracellular. 2 disordered regions span residues 27–100 (TNLP…EGPK) and 114–212 (LTAR…QDFT). A compositionally biased stretch (acidic residues) spans 32-42 (EDQDGSGDDSD). The O-linked (Xyl...) (chondroitin sulfate) serine glycan is linked to S37. The N-linked (GlcNAc...) asparagine glycan is linked to N43. 2 O-linked (Xyl...) (heparan sulfate) serine glycosylation sites follow: S45 and S47. Positions 55-75 (ITLSQQTPSTWKDTQLLTAIP) are enriched in polar residues. Basic and acidic residues predominate over residues 117–127 (REQEATPRPRE). A compositionally biased stretch (low complexity) spans 128-151 (TTQLPTTHLASTTTATTAQEPATS). Residues 153–164 (PHRDMQPGHHET) are compositionally biased toward basic and acidic residues. O-linked (Xyl...) (chondroitin sulfate) serine glycans are attached at residues S206 and S216. The helical transmembrane segment at 255 to 275 (GVIAGGLVGLIFAVCLVGFML) threads the bilayer. At 276–310 (YRMKKKDEGSYSLEEPKQANGGAYQKPTKQEEFYA) the chain is on the cytoplasmic side. The tract at residues 284-310 (GSYSLEEPKQANGGAYQKPTKQEEFYA) is disordered. The residue at position 285 (S285) is a Phosphoserine.

Belongs to the syndecan proteoglycan family. Interacts with CDCP1. Interacts (via C-terminus) with TIAM1 (via PDZ domain). Interacts with MDK. In terms of processing, shedding is enhanced by a number of factors such as heparanase, thrombin or EGF. Also by stress and wound healing. PMA-mediated shedding is inhibited by TIMP3. In terms of tissue distribution, detected in placenta (at protein level). Detected in fibroblasts (at protein level).

The protein resides in the membrane. The protein localises to the secreted. It is found in the extracellular exosome. Cell surface proteoglycan that contains both heparan sulfate and chondroitin sulfate and that links the cytoskeleton to the interstitial matrix. Regulates exosome biogenesis in concert with SDCBP and PDCD6IP. Able to induce its own expression in dental mesenchymal cells and also in the neighboring dental epithelial cells via an MSX1-mediated pathway. The polypeptide is Syndecan-1 (Homo sapiens (Human)).